Here is a 244-residue protein sequence, read N- to C-terminus: Krueppel-like factor 9 (244 aa).

Disordered stretches follow at residues 24–51 (VPEHGGAPDAERLRLPEREVTKEHGDPG) and 79–143 (PSVC…EKRH). The span at 32–51 (DAERLRLPEREVTKEHGDPG) shows a compositional bias: basic and acidic residues. A Phosphoserine modification is found at Ser-122. Over residues 134-143 (KGKHASEKRH) the composition is skewed to basic residues. 3 C2H2-type zinc fingers span residues 143-167 (HKCPYSGCGKVYGKSSHLKAHYRVH), 173-197 (FPCTWPDCLKKFSRSDELTRHYRTH), and 203-225 (FRCPLCEKRFMRSDHLTKHARRH).

Belongs to the Sp1 C2H2-type zinc-finger protein family. Interacts with ZZEF1.

It is found in the nucleus. Functionally, transcription factor that binds to GC box promoter elements. Selectively activates mRNA synthesis from genes containing tandem repeats of GC boxes but represses genes with a single GC box. Acts as an epidermal circadian transcription factor regulating keratinocyte proliferation. The sequence is that of Krueppel-like factor 9 (Klf9) from Rattus norvegicus (Rat).